Here is a 205-residue protein sequence, read N- to C-terminus: Proteasome subunit beta type-3 (205 aa).

N-acetylserine is present on Ser2. Lys77 bears the N6-acetyllysine mark.

This sequence belongs to the peptidase T1B family. As to quaternary structure, the 26S proteasome consists of a 20S proteasome core and two 19S regulatory subunits. The 20S proteasome core is a barrel-shaped complex made of 28 subunits that are arranged in four stacked rings. The two outer rings are each formed by seven alpha subunits, and the two inner rings are formed by seven beta subunits. The proteolytic activity is exerted by three beta-subunits PSMB5, PSMB6 and PSMB7. (Microbial infection) Interacts with HIV-1 TAT protein.

It is found in the cytoplasm. The protein localises to the nucleus. Functionally, non-catalytic component of the 20S core proteasome complex involved in the proteolytic degradation of most intracellular proteins. This complex plays numerous essential roles within the cell by associating with different regulatory particles. Associated with two 19S regulatory particles, forms the 26S proteasome and thus participates in the ATP-dependent degradation of ubiquitinated proteins. The 26S proteasome plays a key role in the maintenance of protein homeostasis by removing misfolded or damaged proteins that could impair cellular functions, and by removing proteins whose functions are no longer required. Associated with the PA200 or PA28, the 20S proteasome mediates ubiquitin-independent protein degradation. This type of proteolysis is required in several pathways including spermatogenesis (20S-PA200 complex) or generation of a subset of MHC class I-presented antigenic peptides (20S-PA28 complex). In Homo sapiens (Human), this protein is Proteasome subunit beta type-3.